Reading from the N-terminus, the 901-residue chain is Protein translocase subunit SecA (901 aa).

ATP-binding positions include Gln85, 103 to 107, and Asp492; that span reads GEGKT. Residues 828–901 are disordered; sequence GLVTDDGGNP…PKNRRNKKRR (74 aa). Residues 871-881 are compositionally biased toward basic and acidic residues; the sequence is DGQKPRGEGNR. Over residues 882–901 the composition is skewed to basic residues; it reads AARRSAASKKPKNRRNKKRR.

The protein belongs to the SecA family. Monomer and homodimer. Part of the essential Sec protein translocation apparatus which comprises SecA, SecYEG and auxiliary proteins SecDF. Other proteins may also be involved.

Its subcellular location is the cell membrane. The protein resides in the cytoplasm. The catalysed reaction is ATP + H2O + cellular proteinSide 1 = ADP + phosphate + cellular proteinSide 2.. Its function is as follows. Part of the Sec protein translocase complex. Interacts with the SecYEG preprotein conducting channel. Has a central role in coupling the hydrolysis of ATP to the transfer of proteins into and across the cell membrane, serving as an ATP-driven molecular motor driving the stepwise translocation of polypeptide chains across the membrane. In Cutibacterium acnes (strain DSM 16379 / KPA171202) (Propionibacterium acnes), this protein is Protein translocase subunit SecA.